The primary structure comprises 165 residues: Polcalcin Cup a 4 (165 aa).

EF-hand domains are found at residues 22 to 57 (QSVHELEEVFKKFDANGDGKISGSELADILRSMGSE), 58 to 86 (VDEAEVKAMMEEADTDGDGYVSLQEFVDL), 91 to 126 (ATVKDLKNAFKVFDRDCNGTISPAELCETLKSVGEP), and 127 to 162 (CTIEESKNIIHNVDKNGDGLINVEEFQTMMTSEMTD). Residues Asp-35, Asn-37, Asp-39, Lys-41, Glu-46, Asp-71, Asp-73, Asp-75, Tyr-77, Glu-82, Asp-104, Asp-106, Asn-108, Thr-110, Glu-115, Asp-140, Asn-142, Asp-144, and Glu-151 each coordinate Ca(2+).

May exist as monomer and dimer. As to expression, expressed in mature pollen grains.

This chain is Polcalcin Cup a 4, found in Hesperocyparis arizonica (Arizona cypress).